A 138-amino-acid polypeptide reads, in one-letter code: Putative pre-16S rRNA nuclease (138 aa).

Belongs to the YqgF nuclease family.

The protein resides in the cytoplasm. In terms of biological role, could be a nuclease involved in processing of the 5'-end of pre-16S rRNA. The sequence is that of Putative pre-16S rRNA nuclease from Caldicellulosiruptor saccharolyticus (strain ATCC 43494 / DSM 8903 / Tp8T 6331).